We begin with the raw amino-acid sequence, 232 residues long: Phosphatidylserine decarboxylase proenzyme (232 aa).

Ser-190 serves as the catalytic Schiff-base intermediate with substrate; via pyruvic acid. Ser-190 is modified (pyruvic acid (Ser); by autocatalysis).

This sequence belongs to the phosphatidylserine decarboxylase family. PSD-A subfamily. As to quaternary structure, heterodimer of a large membrane-associated beta subunit and a small pyruvoyl-containing alpha subunit. Pyruvate serves as cofactor. Is synthesized initially as an inactive proenzyme. Formation of the active enzyme involves a self-maturation process in which the active site pyruvoyl group is generated from an internal serine residue via an autocatalytic post-translational modification. Two non-identical subunits are generated from the proenzyme in this reaction, and the pyruvate is formed at the N-terminus of the alpha chain, which is derived from the carboxyl end of the proenzyme. The post-translation cleavage follows an unusual pathway, termed non-hydrolytic serinolysis, in which the side chain hydroxyl group of the serine supplies its oxygen atom to form the C-terminus of the beta chain, while the remainder of the serine residue undergoes an oxidative deamination to produce ammonia and the pyruvoyl prosthetic group on the alpha chain.

It localises to the cell membrane. The catalysed reaction is a 1,2-diacyl-sn-glycero-3-phospho-L-serine + H(+) = a 1,2-diacyl-sn-glycero-3-phosphoethanolamine + CO2. It functions in the pathway phospholipid metabolism; phosphatidylethanolamine biosynthesis; phosphatidylethanolamine from CDP-diacylglycerol: step 2/2. In terms of biological role, catalyzes the formation of phosphatidylethanolamine (PtdEtn) from phosphatidylserine (PtdSer). The sequence is that of Phosphatidylserine decarboxylase proenzyme from Cereibacter sphaeroides (strain ATCC 17023 / DSM 158 / JCM 6121 / CCUG 31486 / LMG 2827 / NBRC 12203 / NCIMB 8253 / ATH 2.4.1.) (Rhodobacter sphaeroides).